Consider the following 156-residue polypeptide: 3-hydroxyacyl-[acyl-carrier-protein] dehydratase FabZ (156 aa).

His61 is a catalytic residue.

The protein belongs to the thioester dehydratase family. FabZ subfamily.

Its subcellular location is the cytoplasm. The catalysed reaction is a (3R)-hydroxyacyl-[ACP] = a (2E)-enoyl-[ACP] + H2O. Its function is as follows. Involved in unsaturated fatty acids biosynthesis. Catalyzes the dehydration of short chain beta-hydroxyacyl-ACPs and long chain saturated and unsaturated beta-hydroxyacyl-ACPs. The polypeptide is 3-hydroxyacyl-[acyl-carrier-protein] dehydratase FabZ (Acaryochloris marina (strain MBIC 11017)).